Consider the following 973-residue polypeptide: 109 kDa U5 small nuclear ribonucleoprotein component GFL (973 aa).

The interval 1–40 (MDGSLYGECGNYIGPEIESDRDSDDSVEDEDLQEPGGSNG) is disordered. A compositionally biased stretch (acidic residues) spans 17–33 (IESDRDSDDSVEDEDLQ). One can recognise a tr-type G domain in the interval 122–408 (ALVRNVALVG…LGVTLSNSAY (287 aa)). Residues 131–138 (GHLQHGKT) are G1. Residue 131 to 138 (GHLQHGKT) coordinates GTP. The tract at residues 175–179 (NISIK) is G2. The G3 stretch occupies residues 201-204 (DTPG). GTP contacts are provided by residues 201 to 205 (DTPGN) and 255 to 258 (NKVD). The tract at residues 255 to 258 (NKVD) is G4. The tract at residues 381–383 (YSQ) is G5.

It belongs to the TRAFAC class translation factor GTPase superfamily. Classic translation factor GTPase family. Expressed in flower buds, open flowers and siliques. Expressed at low levels in rosettes leaves, cauline leaves and stems.

The protein resides in the nucleus speckle. Functionally, splicing factor involved in pre-mRNA splicing and component of the spliceosome. In Arabidopsis thaliana (Mouse-ear cress), this protein is 109 kDa U5 small nuclear ribonucleoprotein component GFL.